Here is a 295-residue protein sequence, read N- to C-terminus: Acetyl-coenzyme A carboxylase carboxyl transferase subunit beta (295 aa).

Residues 1 to 20 are disordered; that stretch reads MSWLSKLMPSGIRTENTPAK. Residues 28–295 form the CoA carboxyltransferase N-terminal domain; sequence LWEKCSNCGS…QPHPQDADAA (268 aa). Residues C32, C35, C51, and C54 each coordinate Zn(2+). The C4-type zinc-finger motif lies at 32–54; sequence CSNCGSALYGPELEENLEVCPKC.

It belongs to the AccD/PCCB family. As to quaternary structure, acetyl-CoA carboxylase is a heterohexamer composed of biotin carboxyl carrier protein (AccB), biotin carboxylase (AccC) and two subunits each of ACCase subunit alpha (AccA) and ACCase subunit beta (AccD). Zn(2+) serves as cofactor.

The protein resides in the cytoplasm. The catalysed reaction is N(6)-carboxybiotinyl-L-lysyl-[protein] + acetyl-CoA = N(6)-biotinyl-L-lysyl-[protein] + malonyl-CoA. The protein operates within lipid metabolism; malonyl-CoA biosynthesis; malonyl-CoA from acetyl-CoA: step 1/1. Component of the acetyl coenzyme A carboxylase (ACC) complex. Biotin carboxylase (BC) catalyzes the carboxylation of biotin on its carrier protein (BCCP) and then the CO(2) group is transferred by the transcarboxylase to acetyl-CoA to form malonyl-CoA. This Xanthomonas campestris pv. campestris (strain 8004) protein is Acetyl-coenzyme A carboxylase carboxyl transferase subunit beta.